A 236-amino-acid chain; its full sequence is uncharacterized protein (236 aa).

Positions 186–236 (HGRGDTRNLNDITGLGHERERDRENTHYEKKPKLDSDSEVDIRSFRQDMDL) are disordered. The segment covering 201–236 (GHERERDRENTHYEKKPKLDSDSEVDIRSFRQDMDL) has biased composition (basic and acidic residues). Position 221 is a phosphoserine (S221).

This is an uncharacterized protein from Saccharomyces cerevisiae (strain ATCC 204508 / S288c) (Baker's yeast).